A 320-amino-acid chain; its full sequence is Protein phosphatase PTC7 homolog fig (320 aa).

The PPM-type phosphatase domain occupies 49–315 (PYLVTAVQGR…DDITLILASV (267 aa)). Mn(2+) contacts are provided by Asp93, Gly94, and Asp238.

The protein belongs to the PP2C family. Mg(2+) is required as a cofactor. It depends on Mn(2+) as a cofactor.

It carries out the reaction O-phospho-L-seryl-[protein] + H2O = L-seryl-[protein] + phosphate. It catalyses the reaction O-phospho-L-threonyl-[protein] + H2O = L-threonyl-[protein] + phosphate. The sequence is that of Protein phosphatase PTC7 homolog fig from Drosophila yakuba (Fruit fly).